Reading from the N-terminus, the 202-residue chain is Ras-related protein RABD2b (202 aa).

GTP-binding positions include 15–23 (GDSGVGKSC), 33–40 (YLDSYIST), 63–67 (DTAGQ), 121–124 (NKND), and 151–153 (SAK). Residues 37–45 (YISTIGVDF) carry the Effector region motif. The disordered stretch occupies residues 174 to 202 (ASQPAGGAKPPTVQIRGQPVNQQSGCCSS). The segment covering 192 to 202 (PVNQQSGCCSS) has biased composition (polar residues). S-geranylgeranyl cysteine attachment occurs at residues Cys199 and Cys200.

This sequence belongs to the small GTPase superfamily. Rab family.

The protein resides in the golgi apparatus. It is found in the trans-Golgi network membrane. The protein localises to the golgi apparatus membrane. Protein transport. Regulator of membrane traffic from the Golgi apparatus towards the endoplasmic reticulum (ER). This is Ras-related protein RABD2b (RABD2B) from Arabidopsis thaliana (Mouse-ear cress).